We begin with the raw amino-acid sequence, 248 residues long: PF03932 family protein CutC (248 aa).

Belongs to the CutC family. In terms of assembly, homodimer.

It localises to the cytoplasm. In Escherichia coli O9:H4 (strain HS), this protein is PF03932 family protein CutC.